The following is a 73-amino-acid chain: Large ribosomal subunit protein bL31 (73 aa).

Zn(2+) is bound by residues Cys16, Cys18, Cys36, and Cys39.

Belongs to the bacterial ribosomal protein bL31 family. Type A subfamily. Part of the 50S ribosomal subunit. Zn(2+) serves as cofactor.

In terms of biological role, binds the 23S rRNA. In Desulfotalea psychrophila (strain LSv54 / DSM 12343), this protein is Large ribosomal subunit protein bL31.